The chain runs to 131 residues: Photosystem II reaction center Psb28 protein (131 aa).

Residues N110–A131 are disordered. Positions L112 to A125 are enriched in polar residues.

This sequence belongs to the Psb28 family. In terms of assembly, part of the photosystem II complex.

It localises to the cellular thylakoid membrane. This Synechococcus sp. (strain CC9902) protein is Photosystem II reaction center Psb28 protein.